The following is a 727-amino-acid chain: Probable acyl-activating enzyme 18, peroxisomal (727 aa).

The short motif at 725–727 (SRI) is the Microbody targeting signal element.

Belongs to the ATP-dependent AMP-binding enzyme family. In terms of tissue distribution, expressed in flowers.

It is found in the peroxisome. Its function is as follows. May be involved in the peroxisomal activation of 2,4-dichlorophenoxybutyric acid (2,4-DB), a precursor of active auxins that inhibit root growth. The chain is Probable acyl-activating enzyme 18, peroxisomal (AAE18) from Arabidopsis thaliana (Mouse-ear cress).